A 211-amino-acid chain; its full sequence is Uridine kinase (211 aa).

An ATP-binding site is contributed by 12 to 19; that stretch reads GGSGSGKT.

Belongs to the uridine kinase family.

It localises to the cytoplasm. It carries out the reaction uridine + ATP = UMP + ADP + H(+). The enzyme catalyses cytidine + ATP = CMP + ADP + H(+). The protein operates within pyrimidine metabolism; CTP biosynthesis via salvage pathway; CTP from cytidine: step 1/3. Its pathway is pyrimidine metabolism; UMP biosynthesis via salvage pathway; UMP from uridine: step 1/1. The sequence is that of Uridine kinase from Geobacillus sp. (strain WCH70).